The chain runs to 330 residues: ADP-L-glycero-D-manno-heptose-6-epimerase (330 aa).

NADP(+) contacts are provided by residues 11–12, 32–33, glutamine 39, glutamine 54, 75–79, and asparagine 92; these read FI, DD, and QGACA. Tyrosine 139 serves as the catalytic Proton acceptor. Residue lysine 143 participates in NADP(+) binding. Asparagine 168 is a substrate binding site. Residues valine 169 and lysine 177 each coordinate NADP(+). Lysine 177 functions as the Proton acceptor in the catalytic mechanism. Substrate is bound by residues arginine 179, histidine 186, 200-203, arginine 213, and tyrosine 292; that span reads FGEH.

It belongs to the NAD(P)-dependent epimerase/dehydratase family. HldD subfamily. Homopentamer. NADP(+) serves as cofactor.

The catalysed reaction is ADP-D-glycero-beta-D-manno-heptose = ADP-L-glycero-beta-D-manno-heptose. It functions in the pathway nucleotide-sugar biosynthesis; ADP-L-glycero-beta-D-manno-heptose biosynthesis; ADP-L-glycero-beta-D-manno-heptose from D-glycero-beta-D-manno-heptose 7-phosphate: step 4/4. Its pathway is bacterial outer membrane biogenesis; LPS core biosynthesis. Catalyzes the interconversion between ADP-D-glycero-beta-D-manno-heptose and ADP-L-glycero-beta-D-manno-heptose via an epimerization at carbon 6 of the heptose. The chain is ADP-L-glycero-D-manno-heptose-6-epimerase from Pseudomonas aeruginosa (strain ATCC 15692 / DSM 22644 / CIP 104116 / JCM 14847 / LMG 12228 / 1C / PRS 101 / PAO1).